Consider the following 199-residue polypeptide: MPNYKLTYFNLRGRAEICRYLFAYAGIKYEDHRLEGADWPKIKPTIPFGKVPILEVDGVIIHQSLAIARYLARESGLAGQTPVEQALADAIVDTIDDFMMLFPWAEKNQDVKEKAFNDILTNKAPELLKDLDTFLGDKKWFVGKSVTWADFYWDVCSTTLLSYKADLADKYPRLLALRDRVEALPAIAAWIQKRPKTAI.

The region spanning 2 to 79 (PNYKLTYFNL…YLARESGLAG (78 aa)) is the GST N-terminal domain. Glutathione-binding positions include tyrosine 8, arginine 14, tryptophan 39, 49-51 (GKV), and 63-64 (QS). Residues 81-199 (TPVEQALADA…WIQKRPKTAI (119 aa)) enclose the GST C-terminal domain.

The protein belongs to the GST superfamily. Sigma family. Requires glutathione as cofactor. Highly expressed in liver, kidney, small intestine and colon, moderately in pancreas, bone marrow, lung and ovary, and expressed at low levels in spleen, thymus, heart and brain. Not detected in oviduct or skin (at protein level). Expressed in liver.

It is found in the cytoplasm. The catalysed reaction is prostaglandin H2 = prostaglandin D2. It catalyses the reaction RX + glutathione = an S-substituted glutathione + a halide anion + H(+). It carries out the reaction 2-glyceryl-prostaglandin H2 = 2-glyceryl-prostaglandin D2. Bifunctional enzyme which catalyzes both the conversion of PGH2 to PGD2, a prostaglandin involved in smooth muscle contraction/relaxation and a potent inhibitor of platelet aggregation, and the conjugation of glutathione with a wide range of aryl halides, organic isothiocyanates and alpha,beta-unsaturated carbonyls. Also exhibits low glutathione-peroxidase activity towards cumene hydroperoxide and t-butyl hydroperoxide. The chain is Hematopoietic prostaglandin D synthase (HPGDS) from Gallus gallus (Chicken).